A 435-amino-acid chain; its full sequence is Arginine/serine-rich coiled-coil protein 2 (435 aa).

Over residues Met1 to Ser27 the composition is skewed to basic and acidic residues. Positions Met1 to Asn230 are disordered. Ala2 carries the post-translational modification N-acetylalanine. Ser4 is subject to Phosphoserine. Residues Thr6 and Thr16 each carry the phosphothreonine modification. Ser17, Ser30, and Ser32 each carry phosphoserine. Basic residues predominate over residues Ala35–Lys51. Basic and acidic residues predominate over residues Arg66–Arg111. The residue at position 104 (Ser104) is a Phosphoserine. Residues His112–Ser214 are compositionally biased toward basic residues. Positions Asn230–Ala270 form a coiled coil. Residue Lys376 forms a Glycyl lysine isopeptide (Lys-Gly) (interchain with G-Cter in SUMO1); alternate linkage. Residue Lys376 forms a Glycyl lysine isopeptide (Lys-Gly) (interchain with G-Cter in SUMO2); alternate linkage. Ser377 bears the Phosphoserine mark.

It belongs to the RSRC2 family.

This chain is Arginine/serine-rich coiled-coil protein 2 (RSRC2), found in Pongo abelii (Sumatran orangutan).